The following is a 237-amino-acid chain: ADTIVAVELDTYPNTDIGDPSYPHIGIDIKSVRSKKTAKWNMQNGKVGTAHIIYNSVGKRLSAVVSYPNGDSATVSYDVDLDNVLPEWVRVGLSASTGLYKETNTILSWSFTSKLKSNSTHETNALHFMFNQFSKDQKDLILQGDATTGTDGNLELTRVSSNGSPQGNSVGRALFYAPVHIWESSAVVASFDATFTFLIKSPDSHPADGIAFFISNIDSSIPSGSTGRLLGLFPDAN.

Mn(2+) contacts are provided by Glu-8 and Asp-10. The Ca(2+) site is built by Asp-10, Tyr-12, Asn-14, and Asp-19. Asn-14 contributes to the a carbohydrate binding site. Asp-19 and His-24 together coordinate Mn(2+). Residues 98–100 (GLY), Asp-208, and Arg-228 contribute to the a carbohydrate site.

The protein belongs to the leguminous lectin family. In terms of assembly, homotetramer. Concanavalin A-like lectins of the Diocleinae subtribe undergo proteolytic processing referred to as circular permutation. The propeptide is split into an N-terminal and a C-terminal part, the gamma and beta chain, respectively. These are then religated in beta-gamma order to form the mature alpha chain. The beta and gamma chains can often be detected in cell extracts. Residues 1-118 of the mature chain, as displayed here, probably constitute the beta chain in the propeptide, residues 119-237 the gamma chain.

Functionally, glucose/D-mannose specific lectin. In Canavalia cathartica (Jackbean), this protein is Concanavalin-A.